A 30-amino-acid chain; its full sequence is Glutathione S-transferase (30 aa).

This sequence belongs to the GST superfamily. In terms of assembly, monomer and homodimer.

Its subcellular location is the cytoplasm. The catalysed reaction is RX + glutathione = an S-substituted glutathione + a halide anion + H(+). Conjugation of reduced glutathione to a wide number of exogenous and endogenous hydrophobic electrophiles. This Pseudomonas fluorescens protein is Glutathione S-transferase.